Here is a 581-residue protein sequence, read N- to C-terminus: Trehalase (581 aa).

It belongs to the glycosyl hydrolase 15 family. Monomer.

It catalyses the reaction alpha,alpha-trehalose + H2O = alpha-D-glucose + beta-D-glucose. Its pathway is glycan degradation; trehalose degradation; D-glucose from alpha,alpha-trehalose: step 1/1. Its activity is regulated as follows. Inhibited by validamycin A. In terms of biological role, catalyzes the hydrolysis of alpha,alpha-trehalose into two molecules of D-glucose. This Thermoplasma acidophilum (strain ATCC 25905 / DSM 1728 / JCM 9062 / NBRC 15155 / AMRC-C165) protein is Trehalase.